An 878-amino-acid chain; its full sequence is DNA mismatch repair protein MutS (878 aa).

Gly-618–Ser-625 lines the ATP pocket. Basic and acidic residues-rich tracts occupy residues Leu-800–Pro-811 and Gly-863–Arg-878. Disordered regions lie at residues Leu-800 to Leu-842 and Ser-859 to Arg-878.

The protein belongs to the DNA mismatch repair MutS family.

Functionally, this protein is involved in the repair of mismatches in DNA. It is possible that it carries out the mismatch recognition step. This protein has a weak ATPase activity. The polypeptide is DNA mismatch repair protein MutS (Alkalilimnicola ehrlichii (strain ATCC BAA-1101 / DSM 17681 / MLHE-1)).